The following is a 616-amino-acid chain: D-glutamate cyclase, mitochondrial (616 aa).

The transit peptide at 1–28 (MPFTLHLRSRLPSAIRSLILQKKPNIRN) directs the protein to the mitochondrion.

This sequence belongs to the D-glutamate cyclase family.

Its subcellular location is the mitochondrion matrix. It carries out the reaction D-glutamate = 5-oxo-D-proline + H2O. Functionally, D-glutamate cyclase that converts D-glutamate to 5-oxo-D-proline. The protein is D-glutamate cyclase, mitochondrial of Homo sapiens (Human).